Consider the following 353-residue polypeptide: GTPase Obg (353 aa).

Residues 1 to 159 (MRFVDEVVIN…RVIRLELKLL (159 aa)) enclose the Obg domain. Residues 160-334 (ADVGLLGMPN…LCTAIMQELT (175 aa)) enclose the OBG-type G domain. GTP is bound by residues 166-173 (GMPNAGKS), 191-195 (FTTLH), 213-216 (DIPG), 284-287 (NKMD), and 315-317 (SAA). Positions 173 and 193 each coordinate Mg(2+).

The protein belongs to the TRAFAC class OBG-HflX-like GTPase superfamily. OBG GTPase family. As to quaternary structure, monomer. Mg(2+) serves as cofactor.

Its subcellular location is the cytoplasm. An essential GTPase which binds GTP, GDP and possibly (p)ppGpp with moderate affinity, with high nucleotide exchange rates and a fairly low GTP hydrolysis rate. Plays a role in control of the cell cycle, stress response, ribosome biogenesis and in those bacteria that undergo differentiation, in morphogenesis control. In Dichelobacter nodosus (strain VCS1703A), this protein is GTPase Obg.